Reading from the N-terminus, the 602-residue chain is Glutamyl-tRNA(Gln) amidotransferase subunit B, mitochondrial (602 aa).

A mitochondrion-targeting transit peptide spans 1 to 56 (MFRSCLRHCRRATVRSRTCPRCSHHEIPQLQVVQRQISLSSSFPHIRRLQTSSTDT).

This sequence belongs to the GatB/GatE family. GatB subfamily. As to quaternary structure, subunit of the heterotrimeric GatCAB amidotransferase (AdT) complex, composed of A, B and C subunits.

Its subcellular location is the mitochondrion. It catalyses the reaction L-glutamyl-tRNA(Gln) + L-glutamine + ATP + H2O = L-glutaminyl-tRNA(Gln) + L-glutamate + ADP + phosphate + H(+). Allows the formation of correctly charged Gln-tRNA(Gln) through the transamidation of misacylated Glu-tRNA(Gln) in the mitochondria. The reaction takes place in the presence of glutamine and ATP through an activated gamma-phospho-Glu-tRNA(Gln). The sequence is that of Glutamyl-tRNA(Gln) amidotransferase subunit B, mitochondrial (nempA) from Emericella nidulans (strain FGSC A4 / ATCC 38163 / CBS 112.46 / NRRL 194 / M139) (Aspergillus nidulans).